The chain runs to 353 residues: MSTRRDLPQSPYLAAVAGRKPSRVPVWFMRQAGRSLPEYRALRRQHSMLAACFEPEVACEVTMQPIRRYHVDAAILFSDIVVPLRAAGVDLDIVADVGPVIAAPVRTVADVDAIKPIDSQSIAPVLDAVELLVAELGDTPLIGFAGAPFTLASYLVEGGPSRHHARTKAMMLAEPATWHALMTKLTDLTIEFLLGQIRAGVDAIQVFDSWAGMLSLADYRQYALPHSARVFATLAEHGVPMTHFGVGTAELLGAMSEAVKPGTAKVVGVDWRTALADAAARVQPGTALQGNLDPVVLLAGWPAVERAARAVVDDGRRAVDAGAAGYVFNLGHGVLPQTDPGVLTDLVSLVHSL.

Substrate contacts are provided by residues 30–34, D79, Y154, S209, and H332; that span reads RQAGR.

The protein belongs to the uroporphyrinogen decarboxylase family. As to quaternary structure, homodimer.

Its subcellular location is the cytoplasm. The enzyme catalyses uroporphyrinogen III + 4 H(+) = coproporphyrinogen III + 4 CO2. Its pathway is porphyrin-containing compound metabolism; protoporphyrin-IX biosynthesis; coproporphyrinogen-III from 5-aminolevulinate: step 4/4. Catalyzes the decarboxylation of four acetate groups of uroporphyrinogen-III to yield coproporphyrinogen-III. The sequence is that of Uroporphyrinogen decarboxylase from Mycobacterium ulcerans (strain Agy99).